Reading from the N-terminus, the 356-residue chain is Glutamine synthetase cytosolic isozyme (356 aa).

The GS beta-grasp domain maps to 19 to 99; that stretch reads IIAEYIWIGG…VMCDAYTPAG (81 aa). The tract at residues 38 to 66 is disordered; sequence RTLPGPVTDPSQLPKWNYDGSSTGQAPGE. A GS catalytic domain is found at 106 to 356; it reads KRHAAAKIFS…IADTTILWKP (251 aa).

The protein belongs to the glutamine synthetase family. Homooctamer.

The protein resides in the cytoplasm. The catalysed reaction is L-glutamate + NH4(+) + ATP = L-glutamine + ADP + phosphate + H(+). This chain is Glutamine synthetase cytosolic isozyme, found in Medicago sativa (Alfalfa).